We begin with the raw amino-acid sequence, 456 residues long: Exodeoxyribonuclease 7 large subunit (456 aa).

This sequence belongs to the XseA family. As to quaternary structure, heterooligomer composed of large and small subunits.

It localises to the cytoplasm. The enzyme catalyses Exonucleolytic cleavage in either 5'- to 3'- or 3'- to 5'-direction to yield nucleoside 5'-phosphates.. Functionally, bidirectionally degrades single-stranded DNA into large acid-insoluble oligonucleotides, which are then degraded further into small acid-soluble oligonucleotides. This chain is Exodeoxyribonuclease 7 large subunit, found in Shigella flexneri serotype 5b (strain 8401).